The chain runs to 400 residues: 3-phenylpropionate/cinnamic acid dioxygenase ferredoxin--NAD(+) reductase component (400 aa).

Residue 5–36 coordinates FAD; that stretch reads TIIIVGGGQAAAMAAASLRQQGFTGELHLFSD. 146–174 provides a ligand contact to NAD(+); sequence SVVIVGAGTIGLELAASATQRRCKVTVIE.

It belongs to the bacterial ring-hydroxylating dioxygenase ferredoxin reductase family. In terms of assembly, this dioxygenase system consists of four proteins: the two subunits of the hydroxylase component (HcaE and HcaF), a ferredoxin (HcaC) and a ferredoxin reductase (HcaD). It depends on FAD as a cofactor.

It catalyses the reaction 2 reduced [2Fe-2S]-[ferredoxin] + NAD(+) + H(+) = 2 oxidized [2Fe-2S]-[ferredoxin] + NADH. It participates in aromatic compound metabolism; 3-phenylpropanoate degradation. Its function is as follows. Part of the multicomponent 3-phenylpropionate dioxygenase, that converts 3-phenylpropionic acid (PP) and cinnamic acid (CI) into 3-phenylpropionate-dihydrodiol (PP-dihydrodiol) and cinnamic acid-dihydrodiol (CI-dihydrodiol), respectively. In Escherichia coli (strain 55989 / EAEC), this protein is 3-phenylpropionate/cinnamic acid dioxygenase ferredoxin--NAD(+) reductase component.